Here is a 629-residue protein sequence, read N- to C-terminus: tRNA uridine 5-carboxymethylaminomethyl modification enzyme MnmG (629 aa).

13–18 is a binding site for FAD; sequence GGGHAG. 273 to 287 serves as a coordination point for NAD(+); the sequence is GPRYCPSIEDKIVRF.

It belongs to the MnmG family. As to quaternary structure, homodimer. Heterotetramer of two MnmE and two MnmG subunits. The cofactor is FAD.

The protein resides in the cytoplasm. In terms of biological role, NAD-binding protein involved in the addition of a carboxymethylaminomethyl (cmnm) group at the wobble position (U34) of certain tRNAs, forming tRNA-cmnm(5)s(2)U34. The sequence is that of tRNA uridine 5-carboxymethylaminomethyl modification enzyme MnmG from Pseudoalteromonas translucida (strain TAC 125).